A 114-amino-acid chain; its full sequence is Cystatin Pr17a (114 aa).

Residues 1-18 form the signal peptide; the sequence is MSCLKIITLFLFLAAVIA. The region spanning 31 to 109 is the Cystatin domain; that stretch reads GAPEQINPND…QAWLKKTSVK (79 aa). Cysteines 93 and 113 form a disulfide.

Belongs to the cystatin family. As to expression, expressed by the venom gland (posterior main gland) (at protein level).

It is found in the secreted. In Platymeris rhadamanthus (Red spot assassin bug), this protein is Cystatin Pr17a.